The sequence spans 432 residues: Polyadenylate-binding protein RBP47C (432 aa).

A disordered region spans residues 1–55 (MADVKIQSESESSDSHPVVDNQPPPPPPPPQQPAKEEENQPKTSPTPPPHWMRYP). Positions 22 to 32 (QPPPPPPPPQQ) are enriched in pro residues. RRM domains are found at residues 101–183 (KTIW…WASF) and 197–276 (LSIF…PATP). The interval 271–293 (IGPATPRKTNGYQQQGGYMPNGT) is disordered. Polar residues predominate over residues 277-286 (RKTNGYQQQG). The RRM 3 domain maps to 304 to 376 (TTIFVGGLDS…QTVRLSWGRN (73 aa)).

The protein belongs to the polyadenylate-binding RBP47 family. As to quaternary structure, interacts with the poly(A) tail of mRNA in nucleus. As to expression, expressed in leaves, stems, flowers, and seedlings.

The protein localises to the nucleus. It is found in the cytoplasmic granule. Heterogeneous nuclear ribonucleoprotein (hnRNP)-protein binding the poly(A) tail of mRNA and probably involved in some steps of pre-mRNA maturation. This Arabidopsis thaliana (Mouse-ear cress) protein is Polyadenylate-binding protein RBP47C (RBP47C).